The sequence spans 148 residues: Aspartate carbamoyltransferase regulatory chain (148 aa).

C106, C111, C134, and C137 together coordinate Zn(2+).

Belongs to the PyrI family. Contains catalytic and regulatory chains. Requires Zn(2+) as cofactor.

Involved in allosteric regulation of aspartate carbamoyltransferase. The chain is Aspartate carbamoyltransferase regulatory chain from Methanococcus maripaludis (strain C5 / ATCC BAA-1333).